Reading from the N-terminus, the 472-residue chain is uncharacterized protein (472 aa).

To B.subtilis YcdC.

This is an uncharacterized protein from Bacillus subtilis (strain 168).